The sequence spans 78 residues: Small acidic protein 2 (78 aa).

In terms of tissue distribution, expressed in siliques and anthers.

Functionally, mediates responses to the synthetic auxin 2,4-dichlorophenoxyacetic acid (2,4-D). Not involved in the response to indole-3-acetic acid (IAA). May interact with RUB modification-related components and may regulate the culling-ring ubiquitin E3 ligase complex (CRL) activity. The polypeptide is Small acidic protein 2 (SMAP2) (Arabidopsis thaliana (Mouse-ear cress)).